A 189-amino-acid polypeptide reads, in one-letter code: Protein jagunal homolog (189 aa).

Residues 1 to 34 (MSSRGVRAAGTDGNDFQNRQRIAQHYQESAQYKS) are Cytoplasmic-facing. A helical membrane pass occupies residues 35 to 55 (VLKWFFVPHFLILVFMWLKVG). Residues 56–75 (SEFLRYNFGWKNAFFERLDM) are Lumenal-facing. Residues 76 to 96 (PAAYPWEYVWCLSFIPIVLAL) form a helical membrane-spanning segment. The Cytoplasmic portion of the chain corresponds to 97 to 105 (SSFQRNKLK). Residues 106-126 (VLHYAYYAEFICGIFPCMIGL) form a helical membrane-spanning segment. Over 127 to 150 (GGQLPELLEYANDMEGSNTPTFKG) the chain is Lumenal. A helical membrane pass occupies residues 151-171 (IFPMVIIWYIFFAVALQIHGF). At 172–189 (SMYFMHHLAAAWAPVKRD) the chain is on the cytoplasmic side.

This sequence belongs to the jagunal family.

The protein resides in the endoplasmic reticulum membrane. This Caenorhabditis briggsae protein is Protein jagunal homolog.